Consider the following 429-residue polypeptide: Ribosomal RNA small subunit methyltransferase B (429 aa).

S-adenosyl-L-methionine contacts are provided by residues 254–260 (CAAPGGK), aspartate 277, aspartate 303, and aspartate 322. Catalysis depends on cysteine 375, which acts as the Nucleophile. Positions 397-419 (ALSETGTPDQPGQQNLPGGEEGD) are disordered. The segment covering 400–412 (ETGTPDQPGQQNL) has biased composition (polar residues).

The protein belongs to the class I-like SAM-binding methyltransferase superfamily. RsmB/NOP family.

Its subcellular location is the cytoplasm. The catalysed reaction is cytidine(967) in 16S rRNA + S-adenosyl-L-methionine = 5-methylcytidine(967) in 16S rRNA + S-adenosyl-L-homocysteine + H(+). Functionally, specifically methylates the cytosine at position 967 (m5C967) of 16S rRNA. This Salmonella paratyphi B (strain ATCC BAA-1250 / SPB7) protein is Ribosomal RNA small subunit methyltransferase B.